Consider the following 963-residue polypeptide: MPAPRAAAAAFLLLHLVLQPWQRTSAQATPQVFDLLPSSSQRLNPSALQPVLTDPTLHEVYLISTFKLQSKSSATIFGLYSSSDNSKYFEFTVMGRLNKAILRYLKNDGKIHLVVFNNLQLADGRRHRVLLRLSNLQRGDGSVELYLDCAQADSVRNLPRAFSGLTQNPESIELRTFQRKPQDFLEELKLVVRGSLFQVASLQDCFLQQSEPLAATSTGDFNRQFLGQMTQLNQLLGEVKDLLRQQVKETSFLRNTIAECQACGPLSFQSPTPNTLVPIAPPAPPTRPTRHCDSSPCFRGVRCTDTRDGFQCGPCPDGYTGNGITCSDVDECKYHPCYPGVRCVNLAPGFRCDACPVGFTGPMVQGVGINFAKTNKQVCTDVDECQNGACVLNSICINTLGSYRCGPCKPGYTGDQTRGCKTERSCRNPEQNPCSVHAQCIEERQGDVTCVCGVGWAGDGYVCGKDVDIDSYPDEELPCSARNCKKDNCKYVPNSGQEDADRDGIGDACDEDADGDGILNEQDNCVLTHNIDQRNSDKDIFGDACDNCRMVLNNDQKDTDGDGRGDACDDDMDGDGIKNILDNCPRVPNRDQQDRDGDDVGDACDSCPDVSNPNQSDVDNDLVGDSCDTNQDSDGDGHQDSTDNCPTVINSSQLDTDKDGIGDECDDDDDNDGIPDLVPPGPDNCRLVPNPAQEDSNNDGVGDICEADFDQDQVIDHIDVCPENAEITLTDFRAYQTVVLDPEGDAQIDPNWVVLNQGMEIVQTMNSDPGLAVGYTAFNGVDFEGTFHVNTQTDDDYAGFIFGYQDSSSFYVVMWKQTEQTYWQATPFRAVAEPGIQLKAVKSKTGPGEHLRNSLWHTGDTSDQVRLLWKDSRNVGWKDKVSYRWFLQHRPQVGYIRVRFYEGSELVADSGVTIDTTMRGGRLGVFCFSQENIIWSNLKYRCNDTIPEDFQEFQTQSFDRLDN.

A signal peptide spans 1–26 (MPAPRAAAAAFLLLHLVLQPWQRTSA). The region spanning 29 to 194 (TPQVFDLLPS…LEELKLVVRG (166 aa)) is the Laminin G-like domain. The short motif at 138–140 (RGD) is the Cell attachment site element. Positions 288-327 (PTRHCDSSPCFRGVRCTDTRDGFQCGPCPDGYTGNGITCS) constitute an EGF-like 1 domain. Disulfide bonds link Cys292/Cys303, Cys297/Cys312, Cys315/Cys326, Cys332/Cys343, Cys337/Cys352, Cys355/Cys379, Cys385/Cys396, Cys390/Cys405, Cys408/Cys420, Cys426/Cys440, Cys434/Cys450, Cys452/Cys463, Cys479/Cys484, Cys489/Cys509, Cys525/Cys545, Cys548/Cys568, Cys584/Cys604, Cys607/Cys627, Cys645/Cys665, Cys685/Cys705, and Cys721/Cys942. Residues 328 to 365 (DVDECKYHPCYPGVRCVNLAPGFRCDACPVGFTGPMVQ) enclose the EGF-like 2; calcium-binding domain. The 38-residue stretch at 381–418 (DVDECQNGACVLNSICINTLGSYRCGPCKPGYTGDQTR) folds into the EGF-like 3; calcium-binding domain. Positions 422-464 (TERSCRNPEQNPCSVHAQCIEERQGDVTCVCGVGWAGDGYVCG) constitute an EGF-like 4 domain. TSP type-3 repeat units follow at residues 465–497 (KDVD…NSGQ), 498–533 (EDAD…NIDQ), 534–556 (RNSD…NNDQ), 557–592 (KDTD…NRDQ), 593–615 (QDRD…NPNQ), 616–653 (SDVD…NSSQ), 654–693 (LDTD…NPAQ), and 694–729 (EDSN…EITL). Positions 564 to 566 (RGD) match the Cell attachment site motif. Residues 579–676 (NILDNCPRVP…DDDDNDGIPD (98 aa)) form a disordered region. Residues Asn614 and Asn650 are each glycosylated (N-linked (GlcNAc...) asparagine). The segment covering 642–654 (TDNCPTVINSSQL) has biased composition (polar residues). Acidic residues predominate over residues 662–673 (GDECDDDDDNDG). In terms of domain architecture, TSP C-terminal spans 733-947 (RAYQTVVLDP…LKYRCNDTIP (215 aa)). Asn943 is a glycosylation site (N-linked (GlcNAc...) asparagine).

This sequence belongs to the thrombospondin family. In terms of assembly, homopentamer; disulfide-linked. Interacts with PTBP3. Interacts (via EGF-like 3; calcium-binding domain) with ATF6 and facilitates its processing, activation and nuclear translocation. Interacts with NOTCH1. In terms of tissue distribution, heart. Up-regulated in the heart in response to ischemic injury and pathology (at protein level). Astrocytes; expressed at high levels in subventricular zone (SVZ)-derived astrocytes and at low levels in cortical astrocytes. In response to peripheral nerve injury, significantly up-regulated in the dorsal spinal cord (at protein level).

The protein resides in the endoplasmic reticulum. It localises to the sarcoplasmic reticulum. Its subcellular location is the secreted. It is found in the extracellular space. The protein localises to the extracellular matrix. In terms of biological role, adhesive glycoprotein that mediates cell-to-cell and cell-to-matrix interactions and is involved in various processes including cellular proliferation, migration, adhesion and attachment, inflammatory response to CNS injury, regulation of vascular inflammation and adaptive responses of the heart to pressure overload and in myocardial function and remodeling. Binds to structural extracellular matrix (ECM) proteins and modulates the ECM in response to tissue damage, contributing to cardioprotective and adaptive ECM remodeling. Plays a role in ER stress response, via its interaction with the activating transcription factor 6 alpha (ATF6) which produces adaptive ER stress response factors and protects myocardium from pressure overload. May contribute to spinal presynaptic hypersensitivity and neuropathic pain states after peripheral nerve injury. May play a role in regulating protective astrogenesis from the subventricular zone (SVZ) niche after injury in a NOTCH1-dependent manner. In Mus musculus (Mouse), this protein is Thrombospondin-4 (Thbs4).